The chain runs to 129 residues: Large ribosomal subunit protein bL12 (129 aa).

It belongs to the bacterial ribosomal protein bL12 family. As to quaternary structure, homodimer. Part of the ribosomal stalk of the 50S ribosomal subunit. Forms a multimeric L10(L12)X complex, where L10 forms an elongated spine to which 2 to 4 L12 dimers bind in a sequential fashion. Binds GTP-bound translation factors.

Its function is as follows. Forms part of the ribosomal stalk which helps the ribosome interact with GTP-bound translation factors. Is thus essential for accurate translation. The polypeptide is Large ribosomal subunit protein bL12 (Photobacterium profundum (strain SS9)).